The following is a 164-amino-acid chain: MPFELPDNLHPDCGPVAWLLGRWGGRGHGDYPTIEGFQYGQELVFTHDGRPFFHYFARAWIVDDAGEKVREAAQEAGFLRCKPEGRVELLLTHNTGFAEVWYGEAADGKLELTTDAVVRTESAKEYTGGKRLYGNVEGDLLYAYDMAAMGQPLQPHLWARLVRQ.

A GXWXGXG motif is present at residues G21–G27. The heme b site is built by K130 and H156.

The protein belongs to the nitrobindin family. As to quaternary structure, homodimer. Requires heme b as cofactor.

It catalyses the reaction peroxynitrite = nitrate. It functions in the pathway nitrogen metabolism. In terms of biological role, heme-binding protein able to scavenge peroxynitrite and to protect free L-tyrosine against peroxynitrite-mediated nitration, by acting as a peroxynitrite isomerase that converts peroxynitrite to nitrate. Therefore, this protein likely plays a role in peroxynitrite sensing and in the detoxification of reactive nitrogen and oxygen species (RNS and ROS, respectively). Is able to bind nitric oxide (NO) in vitro, but may act as a sensor of peroxynitrite levels in vivo. The polypeptide is Peroxynitrite isomerase (Nocardioides sp. (strain ATCC BAA-499 / JS614)).